The chain runs to 86 residues: Large ribosomal subunit protein eL43 (86 aa).

The Zn(2+) site is built by cysteine 40, cysteine 43, cysteine 58, and cysteine 61. The segment at cysteine 40 to cysteine 61 adopts a C4-type zinc-finger fold.

The protein belongs to the eukaryotic ribosomal protein eL43 family. Putative zinc-binding subfamily. Part of the 50S ribosomal subunit. Zn(2+) is required as a cofactor.

Functionally, binds to the 23S rRNA. This is Large ribosomal subunit protein eL43 from Nanoarchaeum equitans (strain Kin4-M).